A 104-amino-acid chain; its full sequence is MATELKEYLVIIPDLPDVLAKRQVLLKPHNQDAAPLVKAGRVPFFGSTLAHHSAEGQQVAENGTVMIIKAESEEEIKEIIRKDIFTIEGVWDFGKLSIWPFKSK.

It belongs to the YciI family.

The protein operates within mycotoxin biosynthesis. Part of the gene cluster that mediates the biosynthesis of fusaric acid, a mycotoxin with low to moderate toxicity to animals and humans, but with high phytotoxic properties. L-aspartate is suggested as fusaric acid amino acid precursor that is activated and further processed to O-acetyl-L-homoserine by cluster enzymes aspartate kinase FUB3 and homoserine O-acetyltransferase FUB5, as well as enzymes of the primary metabolism. The polyketide synthase (PKS) FUB1 generates the triketide trans-2-hexenal which is presumptively released by the hydrolase FUB4 and linked to the NRPS-bound amino acid precursor by NAD(P)-dependent dehydrogenase FUB6. FUB1, FUB4, and the non-canonical NRPS Fub8 may form an enzyme complex. Further processing of the NRPS-bound intermediate might be carried out by FUB6 and the sulfhydrylase FUB7, enabling a spontaneous electrocyclization to close the carbon backbone of fusaric acid. Dihydrofusaric acid is likely to be released via reduction by the thioester reductase (TR) domain of FUB8 whereupon the final oxidation to fusaric acid may (also) be performed by the FMN-dependent dehydrogenase FUB9. The chain is Fusaric acid biosynthesis protein 2 from Gibberella fujikuroi (strain CBS 195.34 / IMI 58289 / NRRL A-6831) (Bakanae and foot rot disease fungus).